Consider the following 196-residue polypeptide: Ras-related protein RabC (196 aa).

13–20 (GESGVGKS) is a GTP binding site. Residues 35-43 (FAPTLGVDF) carry the Effector region motif. GTP is bound by residues 63 to 67 (DTAGQ) and 121 to 124 (NKSD). Residues cysteine 195 and cysteine 196 are each lipidated (S-geranylgeranyl cysteine).

This sequence belongs to the small GTPase superfamily. Rab family.

The protein localises to the cell membrane. The chain is Ras-related protein RabC (rabC) from Dictyostelium discoideum (Social amoeba).